The sequence spans 433 residues: Enolase (433 aa).

Position 1 is an N-acetylserine (serine 1). Residues serine 36 and histidine 157 each contribute to the (2R)-2-phosphoglycerate site. Glutamate 209 acts as the Proton donor in catalysis. The Mn(2+) site is built by aspartate 244, glutamate 294, and aspartate 319. Positions 344, 373, and 374 each coordinate (2R)-2-phosphoglycerate. Lysine 344 (proton acceptor) is an active-site residue.

Belongs to the enolase family. Homodimer. The cofactor is Mg(2+).

The protein localises to the cytoplasm. The catalysed reaction is (2R)-2-phosphoglycerate = phosphoenolpyruvate + H2O. The protein operates within carbohydrate degradation; glycolysis; pyruvate from D-glyceraldehyde 3-phosphate: step 4/5. With respect to regulation, inhibited by 2-phosphoglycolic acid. The sequence is that of Enolase from Homarus gammarus (European lobster).